The sequence spans 191 residues: MPVCVMMAELDEKLLLQFETQELEAPGGIATPQVYSQLLVLYLLHNDMNNARYLWKRIPQAIKTANPEMAAIWAVGQRIWQRDFPGIYSAIAAYQWSESILPVMEALRESTRRRAYGLVAQAYTSISAEDFAAFVGYSVEEAVKGVVSHGWQADPNTRMIMPQKPDPPPVSLVPNEQQLARLTDYVAFLEN.

Residues 6–179 (MMAELDEKLL…VSLVPNEQQL (174 aa)) form the PCI domain.

It belongs to the CSN8 family. As to quaternary structure, component of the CSN complex, probably composed of cops1, cops2, cops3, cops4, cops5, cops6, cops7, cops8 and cops9.

Its subcellular location is the cytoplasm. The protein resides in the nucleus. Component of the COP9 signalosome complex (CSN), a complex involved in various cellular and developmental processes. The CSN complex is an essential regulator of the ubiquitin (Ubl) conjugation pathway by mediating the deneddylation of the cullin subunits of E3 ligase complexes, leading to modify the Ubl ligase activity. The protein is COP9 signalosome complex subunit 8 (cops8) of Danio rerio (Zebrafish).